We begin with the raw amino-acid sequence, 31 residues long: Cytochrome b6-f complex subunit 6 (31 aa).

The chain crosses the membrane as a helical span at residues 4–26 (ITSYFGFLLAASTITPALLIGLS).

It belongs to the PetL family. The 4 large subunits of the cytochrome b6-f complex are cytochrome b6, subunit IV (17 kDa polypeptide, PetD), cytochrome f and the Rieske protein, while the 4 small subunits are PetG, PetL, PetM and PetN. The complex functions as a dimer.

The protein resides in the plastid. It is found in the chloroplast thylakoid membrane. Component of the cytochrome b6-f complex, which mediates electron transfer between photosystem II (PSII) and photosystem I (PSI), cyclic electron flow around PSI, and state transitions. PetL is important for photoautotrophic growth as well as for electron transfer efficiency and stability of the cytochrome b6-f complex. This Liriodendron tulipifera (Tuliptree) protein is Cytochrome b6-f complex subunit 6.